Reading from the N-terminus, the 332-residue chain is ATPase GET3 (332 aa).

32–39 (KGGVGKTT) is an ATP binding site. The active site involves Asp-61. Residues Glu-235 and Asn-262 each contribute to the ATP site. The Zn(2+) site is built by Cys-273 and Cys-276.

The protein belongs to the arsA ATPase family. In terms of assembly, homodimer.

It localises to the cytoplasm. Its subcellular location is the endoplasmic reticulum. ATPase required for the post-translational delivery of tail-anchored (TA) proteins to the endoplasmic reticulum. Recognizes and selectively binds the transmembrane domain of TA proteins in the cytosol. This complex then targets to the endoplasmic reticulum by membrane-bound receptors, where the tail-anchored protein is released for insertion. This process is regulated by ATP binding and hydrolysis. ATP binding drives the homodimer towards the closed dimer state, facilitating recognition of newly synthesized TA membrane proteins. ATP hydrolysis is required for insertion. Subsequently, the homodimer reverts towards the open dimer state, lowering its affinity for the membrane-bound receptor, and returning it to the cytosol to initiate a new round of targeting. The protein is ATPase GET3 of Mycosarcoma maydis (Corn smut fungus).